Reading from the N-terminus, the 198-residue chain is RNA-free ribonuclease P (198 aa).

The protein belongs to the HARP family.

It catalyses the reaction Endonucleolytic cleavage of RNA, removing 5'-extranucleotides from tRNA precursor.. Functionally, RNA-free RNase P that catalyzes the removal of the 5'-leader sequence from pre-tRNA to produce the mature 5'-terminus. This Nitrosococcus oceani (strain ATCC 19707 / BCRC 17464 / JCM 30415 / NCIMB 11848 / C-107) protein is RNA-free ribonuclease P.